The chain runs to 399 residues: Ribonuclease D (399 aa).

The 3'-5' exonuclease domain maps to 31–197; the sequence is RVVTDNTALL…PLYHILEKEL (167 aa). Residues 239-318 enclose the HRDC domain; sequence NPLELSRLRV…SQARRISSND (80 aa).

The protein belongs to the RNase D family. The cofactor is a divalent metal cation.

It localises to the cytoplasm. It carries out the reaction Exonucleolytic cleavage that removes extra residues from the 3'-terminus of tRNA to produce 5'-mononucleotides.. Its function is as follows. Exonuclease involved in the 3' processing of various precursor tRNAs. Initiates hydrolysis at the 3'-terminus of an RNA molecule and releases 5'-mononucleotides. The protein is Ribonuclease D of Haemophilus influenzae (strain ATCC 51907 / DSM 11121 / KW20 / Rd).